A 189-amino-acid polypeptide reads, in one-letter code: Peptidyl-tRNA hydrolase (189 aa).

Tyr14 is a binding site for tRNA. His19 (proton acceptor) is an active-site residue. TRNA contacts are provided by Phe64, Asn66, and Asn112.

The protein belongs to the PTH family. In terms of assembly, monomer.

The protein localises to the cytoplasm. The enzyme catalyses an N-acyl-L-alpha-aminoacyl-tRNA + H2O = an N-acyl-L-amino acid + a tRNA + H(+). In terms of biological role, hydrolyzes ribosome-free peptidyl-tRNAs (with 1 or more amino acids incorporated), which drop off the ribosome during protein synthesis, or as a result of ribosome stalling. Catalyzes the release of premature peptidyl moieties from peptidyl-tRNA molecules trapped in stalled 50S ribosomal subunits, and thus maintains levels of free tRNAs and 50S ribosomes. The chain is Peptidyl-tRNA hydrolase from Zymomonas mobilis subsp. mobilis (strain ATCC 31821 / ZM4 / CP4).